The following is a 301-amino-acid chain: Probable 5-dehydro-4-deoxyglucarate dehydratase (301 aa).

Belongs to the DapA family.

It catalyses the reaction 5-dehydro-4-deoxy-D-glucarate + H(+) = 2,5-dioxopentanoate + CO2 + H2O. Its pathway is carbohydrate acid metabolism; D-glucarate degradation; 2,5-dioxopentanoate from D-glucarate: step 2/2. The chain is Probable 5-dehydro-4-deoxyglucarate dehydratase from Cereibacter sphaeroides (strain ATCC 17023 / DSM 158 / JCM 6121 / CCUG 31486 / LMG 2827 / NBRC 12203 / NCIMB 8253 / ATH 2.4.1.) (Rhodobacter sphaeroides).